A 310-amino-acid chain; its full sequence is Ribose-phosphate pyrophosphokinase (310 aa).

Residues 34–36 (DQE) and 93–94 (RQ) each bind ATP. The Mg(2+) site is built by histidine 127 and aspartate 167. Residue lysine 190 is part of the active site. D-ribose 5-phosphate-binding positions include arginine 192, aspartate 216, and 220 to 224 (DSGGT).

Belongs to the ribose-phosphate pyrophosphokinase family. Class I subfamily. Homohexamer. Requires Mg(2+) as cofactor.

It localises to the cytoplasm. The catalysed reaction is D-ribose 5-phosphate + ATP = 5-phospho-alpha-D-ribose 1-diphosphate + AMP + H(+). The protein operates within metabolic intermediate biosynthesis; 5-phospho-alpha-D-ribose 1-diphosphate biosynthesis; 5-phospho-alpha-D-ribose 1-diphosphate from D-ribose 5-phosphate (route I): step 1/1. Its function is as follows. Involved in the biosynthesis of the central metabolite phospho-alpha-D-ribosyl-1-pyrophosphate (PRPP) via the transfer of pyrophosphoryl group from ATP to 1-hydroxyl of ribose-5-phosphate (Rib-5-P). The chain is Ribose-phosphate pyrophosphokinase from Agrobacterium fabrum (strain C58 / ATCC 33970) (Agrobacterium tumefaciens (strain C58)).